The following is a 504-amino-acid chain: Anaerobic nitric oxide reductase transcription regulator NorR (504 aa).

A 4-aspartylphosphate modification is found at D57. Residues 187 to 416 (MIGLSPGMTQ…LEHAIHRAVV (230 aa)) enclose the Sigma-54 factor interaction domain. ATP is bound by residues 215-222 (GETGTGKE) and 278-287 (ADNGTLFLDE). The segment at residues 479–498 (WAACARMLETDVANLHRLAK) is a DNA-binding region (H-T-H motif).

It participates in nitrogen metabolism; nitric oxide reduction. Functionally, required for the expression of anaerobic nitric oxide (NO) reductase, acts as a transcriptional activator for at least the norVW operon. Activation also requires sigma-54. This is Anaerobic nitric oxide reductase transcription regulator NorR from Escherichia coli O81 (strain ED1a).